We begin with the raw amino-acid sequence, 254 residues long: Cell wall biogenesis protein NCW2 (254 aa).

A signal peptide spans 1–17; the sequence is MKACSILFTTLITLAAA. Disordered regions lie at residues 19–57, 111–143, and 167–191; these read KDSG…SAST, TSTA…DGPV, and ATTD…SSTK. Over residues 27 to 42 the composition is skewed to low complexity; it reads QNSEDSSQKESSNSQE. Residues 43-57 show a composition bias toward polar residues; sequence ITPTTTKEAQESAST. Positions 111–139 are enriched in low complexity; sequence TSTASVQPTGETSSGITNSASSSTTSTST. Asn229 carries N-linked (GlcNAc...) asparagine glycosylation. The GPI-anchor amidated asparagine moiety is linked to residue Asn232. A propeptide spans 233 to 254 (removed in mature form); sequence GAFAGTHIAYGAGAFAVGALLL.

The protein resides in the cell membrane. Functionally, cell wall biogenesis protein that participates in the organization of the beta-glucan assembly. Involved in the mechanism responsible for cell tolerance to polyhexamethylene biguanide (PHMB), an antifungal agent. The polypeptide is Cell wall biogenesis protein NCW2 (Saccharomyces cerevisiae (strain ATCC 204508 / S288c) (Baker's yeast)).